The following is a 329-amino-acid chain: Peroxidase 58 (329 aa).

The N-terminal stretch at 1-23 (MGLSKTIPLVLLPILMFGVLSNA) is a signal peptide. Intrachain disulfides connect Cys34/Cys116, Cys67/Cys72, Cys122/Cys325, and Cys201/Cys234. An N-linked (GlcNAc...) asparagine glycan is attached at Asn36. The active-site Proton acceptor is the His65. Ca(2+)-binding residues include Asp66, Val69, Gly71, Asp73, and Ser75. Substrate is bound at residue Pro164. Heme b is bound at residue His194. Ca(2+) is bound at residue Thr195. Residue Asn210 is glycosylated (N-linked (GlcNAc...) asparagine). 3 residues coordinate Ca(2+): Asp247, Ser250, and Asp255.

Belongs to the peroxidase family. Classical plant (class III) peroxidase subfamily. Heme b is required as a cofactor. Requires Ca(2+) as cofactor.

The protein localises to the secreted. It catalyses the reaction 2 a phenolic donor + H2O2 = 2 a phenolic radical donor + 2 H2O. In terms of biological role, removal of H(2)O(2), oxidation of toxic reductants, biosynthesis and degradation of lignin, suberization, auxin catabolism, response to environmental stresses such as wounding, pathogen attack and oxidative stress. These functions might be dependent on each isozyme/isoform in each plant tissue. The polypeptide is Peroxidase 58 (PER58) (Arabidopsis thaliana (Mouse-ear cress)).